The primary structure comprises 265 residues: uncharacterized protein (265 aa).

This is an uncharacterized protein from Mycoplasma capricolum subsp. capricolum (strain California kid / ATCC 27343 / NCTC 10154).